Here is a 210-residue protein sequence, read N- to C-terminus: Protein RFS1 (210 aa).

Residues 4-203 (VAILIYSVDD…RVHQLQGKAF (200 aa)) form the Flavodoxin-like domain.

This sequence belongs to the WrbA family.

It is found in the cytoplasm. The protein resides in the membrane raft. The sequence is that of Protein RFS1 (RFS1) from Saccharomyces cerevisiae (strain ATCC 204508 / S288c) (Baker's yeast).